We begin with the raw amino-acid sequence, 258 residues long: E3 ubiquitin-protein ligase RNF170 (258 aa).

At Met-1 to Asp-24 the chain is on the lumenal side. Residues Gln-25 to Phe-45 traverse the membrane as a helical segment. The Cytoplasmic portion of the chain corresponds to Arg-46–Arg-201. An RING-type zinc finger spans residues Cys-87–Arg-130. The helical transmembrane segment at Ile-202–Glu-222 threads the bilayer. A topological domain (lumenal) is located at residue Ala-223. A helical transmembrane segment spans residues Leu-224–Ile-244. Residues Ser-245–Arg-258 are Cytoplasmic-facing.

As to quaternary structure, (Microbial infection) Interacts with human cytomegalovirus protein NEC2/UL50; this interaction promotes of UBA7 ubiquitination and subsequent proteasomal degradation. In terms of assembly, constitutively associated with the ERLIN1/ERLIN 2 complex. Interacts with activated ITPR1. In terms of tissue distribution, expressed in the spinal cord.

It is found in the endoplasmic reticulum membrane. It carries out the reaction S-ubiquitinyl-[E2 ubiquitin-conjugating enzyme]-L-cysteine + [acceptor protein]-L-lysine = [E2 ubiquitin-conjugating enzyme]-L-cysteine + N(6)-ubiquitinyl-[acceptor protein]-L-lysine.. The protein operates within protein modification; protein ubiquitination. Its function is as follows. E3 ubiquitin-protein ligase that plays an essential role in stimulus-induced inositol 1,4,5-trisphosphate receptor type 1 (ITPR1) ubiquitination and degradation via the endoplasmic reticulum-associated degradation (ERAD) pathway. Also involved in ITPR1 turnover in resting cells. Selectively inhibits the TLR3-triggered innate immune response by promoting the 'Lys-48'-linked polyubiquitination and degradation of TLR3. In Homo sapiens (Human), this protein is E3 ubiquitin-protein ligase RNF170 (RNF170).